The following is a 292-amino-acid chain: Cytidine deaminase (292 aa).

2 CMP/dCMP-type deaminase domains span residues 47–167 and 186–292; these read TPLK…FGPK and DHQD…YYSL. 88 to 90 provides a ligand contact to substrate; the sequence is NQE. Position 101 (H101) interacts with Zn(2+). Catalysis depends on E103, which acts as the Proton donor. C128 and C131 together coordinate Zn(2+).

The protein belongs to the cytidine and deoxycytidylate deaminase family. As to quaternary structure, homodimer. It depends on Zn(2+) as a cofactor.

The catalysed reaction is cytidine + H2O + H(+) = uridine + NH4(+). It catalyses the reaction 2'-deoxycytidine + H2O + H(+) = 2'-deoxyuridine + NH4(+). In terms of biological role, this enzyme scavenges exogenous and endogenous cytidine and 2'-deoxycytidine for UMP synthesis. In Haemophilus influenzae (strain PittEE), this protein is Cytidine deaminase.